The primary structure comprises 399 residues: uncharacterized protein (399 aa).

Helical transmembrane passes span 46–66, 76–95, 139–159, 181–201, 226–246, 262–282, 303–323, 330–350, and 352–372; these read IAPYLITLTGTITILLSFFIV, TLPRWVYAMSGLTLFFYQTM, GVGYISLIQLFITALLPFWMA, IIIIVCALLSTAIFGNAFWTF, LMLNEIIVASLSLPCLITCFF, ILPALKHILVWVIITVSSFIW, VQFSIGIIFGELVSRLILAHM, IIQAPLYPLILSTFCSTINYF, and GTIIIPENLLLILFTVTSFVH.

Belongs to the CDP-alcohol phosphatidyltransferase class-I family.

It localises to the membrane. This is an uncharacterized protein from Dictyostelium discoideum (Social amoeba).